The chain runs to 472 residues: MTKHWGGPGLLAPPVITVGEGAQRDHHLDCRIGYSSSKRSCHRSSNPLLELGGRLDKSTGMAQDSCYRAKATNQGPWELQDGNSSGGKKKNYQRYPKPPYSYLAMIAMVIQNSPEKKLTLSEILKEISTLFPFFKGNYKGWRDSVRHNLSSYDCFVKVLKDPGKPQGKGNFWTVEVNRIPLELLKRQNTAVSRQDETIFAQDLAPYIFQGYSQPNKSKPLPPESSLPPVPTRQSPPPSEDPYRPKLDSTFAIDSLLHSLRPASSAGEGLRERESWGVGPPPHTRSTTPPRPCNASYNGSSSASSVSPASDFSDEDWRGVTVVGKRSGDRGITSDAYSDSCPPPNKSSKRGNTPPWELPTSYAKYTPPNAVAPPSMRFNGNPFMPLGGIPFYGYGGAHVTTSHLIGHPYWPILPSGPVSIQAPPLLMDLDSMLQSVPPNKSVFDALGSNNQTVHPSPNQYALQNGPSLCKYSL.

A disordered region spans residues 36–56 (SSKRSCHRSSNPLLELGGRLD). The segment at residues 97–193 (KPPYSYLAMI…LKRQNTAVSR (97 aa)) is a DNA-binding region (fork-head). 2 disordered regions span residues 211–246 (YSQPNKSKPLPPESSLPPVPTRQSPPPSEDPYRPKL) and 261–360 (PASS…LPTS). Pro residues predominate over residues 219-239 (PLPPESSLPPVPTRQSPPPSE). A compositionally biased stretch (low complexity) spans 294-310 (ASYNGSSSASSVSPASD). Positions 339–465 (SCPPPNKSSK…PNQYALQNGP (127 aa)) are SMAD-interaction domain (SID). Residues 357-361 (LPTSY) carry the Fast/FoxH1 motif 1 (FM1) motif. Residues 367–373 (PNAVAPP) carry the Fast/FoxH1 motif 2 (FM2) motif. Residues 428–448 (LDSMLQSVPPNKSVFDALGSN) carry the SMAD interaction motif (SIM) motif.

Its subcellular location is the nucleus. Transcriptional activator. Activates an activin response element (ARE). Recognizes and binds to the DNA sequence 5'-TGT[GT][GT]ATT-3'. Modulator of nodal signaling required for organizer formation. Also required for the development of dorsal axial structures and left-right symmetry. This chain is Forkhead box protein H1 (foxh1), found in Danio rerio (Zebrafish).